Here is a 439-residue protein sequence, read N- to C-terminus: Synaptotagmin-B (439 aa).

At Met-1–Lys-74 the chain is on the vesicular side. N-linked (GlcNAc...) asparagine glycans are attached at residues Asn-6 and Asn-46. A helical transmembrane segment spans residues Ile-75 to Cys-101. Residues Lys-102–Lys-439 lie on the Cytoplasmic side of the membrane. Residues Lys-113–Lys-155 form a disordered region. A compositionally biased stretch (basic and acidic residues) spans Lys-119–Lys-129. Acidic residues predominate over residues Gln-135–Glu-151. A phospholipid binding region spans residues Glu-153–Asn-399. 2 consecutive C2 domains span residues Lys-159–Arg-278 and Lys-290–His-423. Leu-189, Asp-190, Asp-196, Asp-248, Phe-249, Asp-250, Ser-253, Lys-254, Asp-256, Asp-321, Asp-327, Asp-381, Asp-383, and Asp-389 together coordinate Ca(2+).

It belongs to the synaptotagmin family. As to quaternary structure, homodimer or homotrimer (possible). Requires Ca(2+) as cofactor. As to expression, spinal cord, brainstem, midbrain and electric organ.

Its subcellular location is the cytoplasmic vesicle. It is found in the secretory vesicle. It localises to the synaptic vesicle membrane. The protein localises to the synapse. May have a regulatory role in the membrane interactions during trafficking of synaptic vesicles at the active zone of the synapse. It binds acidic phospholipids with a specificity that requires the presence of both an acidic head group and a diacyl backbone. The chain is Synaptotagmin-B (P65-B) from Diplobatis ommata (Ocellated electric ray).